Here is a 504-residue protein sequence, read N- to C-terminus: Melianol synthase CYP71BQ5 (504 aa).

A helical membrane pass occupies residues 2 to 22 (EFRLPSLPVFLSFLLFFLMLV). Heme is bound at residue C442.

This sequence belongs to the cytochrome P450 family. Heme is required as a cofactor. As to expression, mainly expressed in fruits and leaves.

It is found in the membrane. It carries out the reaction dihydroniloticin + 2 reduced [NADPH--hemoprotein reductase] + 2 O2 = melianol + 2 oxidized [NADPH--hemoprotein reductase] + 3 H2O + 2 H(+). Its pathway is secondary metabolite biosynthesis; terpenoid biosynthesis. Its function is as follows. Monooxygenase involved in the biosynthesis of limonoids triterpene natural products such as azadirachtin, an antifeedant widely used as bioinsecticide, and possessing many medicinal applications including anti-tumoral, anti-malarial, anti-rheumatic, antibacterial, anti-inflammatory, anti-pyretic and diuretic effects. Catalyzes the conversion of dihydroniloticin to the protolimonoid melianol. The sequence is that of Melianol synthase CYP71BQ5 from Azadirachta indica (Neem tree).